A 553-amino-acid chain; its full sequence is Putative transport protein PM1071 (553 aa).

A run of 5 helical transmembrane segments spans residues isoleucine 4 to tryptophan 24, glycine 28 to asparagine 48, phenylalanine 65 to serine 85, leucine 91 to isoleucine 111, and methionine 157 to isoleucine 177. RCK C-terminal domains are found at residues lysine 190–glutamate 276 and glutamate 277–asparagine 361. The next 6 helical transmembrane spans lie at methionine 371 to isoleucine 391, alanine 403 to phenylalanine 425, isoleucine 439 to valine 459, leucine 464 to valine 484, leucine 496 to isoleucine 516, and leucine 533 to leucine 553.

Belongs to the AAE transporter (TC 2.A.81) family. YidE subfamily.

It is found in the cell membrane. The polypeptide is Putative transport protein PM1071 (Pasteurella multocida (strain Pm70)).